Here is a 2716-residue protein sequence, read N- to C-terminus: Trithorax group protein osa (2716 aa).

The segment at 1–969 is disordered; it reads MNEKIKSPQT…RPAGSPQVFN (969 aa). Residues 7–38 show a composition bias toward low complexity; it reads SPQTQQQQQGGAPAPAATPPSAGAAPGAATPP. The segment covering 54-64 has biased composition (polar residues); sequence DPSIQQQQQNV. Residues 69-86 show a composition bias toward pro residues; it reads YGAPPPPGSGPGGPPGPD. Low complexity-rich tracts occupy residues 164–180, 212–222, and 238–257; these read GQPL…QPHP, TPTLNSLLQSS, and PQQA…QQAG. Pro residues predominate over residues 258–272; the sequence is GPPPPGHGPPPPQHQ. The segment covering 294-312 has biased composition (polar residues); it reads LGPSQQYRTPPPTNTSRGQ. Low complexity predominate over residues 320-346; sequence GQNSGSYPSSPQQQQQQQQQQQQQAGQ. Residues 350-359 show a composition bias toward pro residues; that stretch reads GPVPGGPPPG. The span at 360–377 shows a compositional bias: low complexity; the sequence is TGQQPPQQNTPPTSQYSP. The residue at position 384 (Thr384) is a Phosphothreonine. Residues 394–403 are compositionally biased toward polar residues; the sequence is NHRTAYSTHQ. Residues 411-423 are compositionally biased toward low complexity; it reads WPGGSSPSPGSGH. Residues 424–466 are compositionally biased toward pro residues; the sequence is PLPPASPHHVPPLQQQPPPPPHVSAGGPPPSSSPGHAPSPSPQ. 2 stretches are compositionally biased toward low complexity: residues 467–476 and 509–526; these read PSQASPSPHQ and MRPT…SMSP. The segment covering 557 to 571 has biased composition (pro residues); it reads GPPPMPPHPGMPGGP. Residues 572–594 show a composition bias toward low complexity; sequence PQQQQSQQQQASNSASSASNSPQ. Composition is skewed to pro residues over residues 595 to 604, 651 to 669, 747 to 760, and 806 to 818; these read QTPPPAPPPN, PQQP…PQYP, TPPP…PPPQ, and PMGP…PPHG. Position 747 is a phosphothreonine (Thr747). A compositionally biased stretch (low complexity) spans 819-838; it reads PTNMGPPTSTPPQSQMLQGG. Over residues 839 to 851 the composition is skewed to gly residues; the sequence is QPQGQGASGGPES. Polar residues-rich tracts occupy residues 859-868 and 879-904; these read QDNGISSSGP and SVVT…NASA. An ARID domain is found at 1000 to 1091; that stretch reads NPDRRGWLDK…NLLTFECHFD (92 aa). 3 disordered regions span residues 1108 to 1766, 1914 to 1936, and 2045 to 2123; these read SKKK…PGGG, HYEN…EDAD, and KGRK…DCRP. Low complexity-rich tracts occupy residues 1129–1139 and 1164–1173; these read GTTNSTGSSNS and GSPYPVASGP. Residues 1181-1193 are compositionally biased toward polar residues; sequence GQMQRPPSQNNPQ. The span at 1221 to 1256 shows a compositional bias: gly residues; it reads AGGGPGSGTGPGPGQGPGPGAASGGAGAVGAVGGGP. The segment covering 1266 to 1288 has biased composition (low complexity); sequence PHTAAQQAAGQHQQQHPQHQHPG. Residues 1305 to 1318 are compositionally biased toward pro residues; that stretch reads QPPPSVGGGPPPAP. Residues 1407–1427 are compositionally biased toward low complexity; that stretch reads PEGEAPPTGANQYGPYGSRPY. A compositionally biased stretch (pro residues) spans 1428–1438; it reads SQPPPGGPQPP. Low complexity predominate over residues 1456 to 1471; sequence PSSAYPTGRPSQQDYY. Over residues 1508–1524 the composition is skewed to polar residues; sequence QSGTQQYRPQYPSSPAP. The segment covering 1534 to 1548 has biased composition (pro residues); it reads GAAPPPGAPHGPPIQ. Residues 1573-1593 are compositionally biased toward low complexity; it reads QQQQPQQQQQQPPYQQVAGPP. A compositionally biased stretch (pro residues) spans 1620–1629; that stretch reads PGSPLRPPSG. Low complexity-rich tracts occupy residues 1636 to 1652 and 1715 to 1729; these read MPGM…QGGV and GQAM…QPPS. Positions 1731 to 1744 are enriched in basic residues; the sequence is QHPHPHQHPQHQHP. Over residues 1755 to 1766 the composition is skewed to gly residues; the sequence is GGYGPPGMPGGG. One can recognise an EHD domain in the interval 1769–2517; the sequence is LVKKELIFPH…PIHSVEFRLL (749 aa). A phosphoserine mark is found at Ser1930, Ser1932, and Ser2081. Basic and acidic residues-rich tracts occupy residues 2091-2100 and 2109-2123; these read AEGKKSKLTS and EVKK…DCRP. Residues Ser2168 and Ser2169 each carry the phosphoserine modification. Phosphothreonine is present on Thr2176. Position 2181 is a phosphoserine (Ser2181). A compositionally biased stretch (low complexity) spans 2520 to 2566; sequence RQQQQLRPGPAGKQAASAGGSATVKAETASTETSSTEAKPAPAATTA. 2 disordered regions span residues 2520–2617 and 2684–2716; these read RQQQ…SHSS and VGPP…TAVA. Residues 2570–2579 show a composition bias toward polar residues; it reads DENSNSSQQL. Low complexity-rich tracts occupy residues 2584 to 2617 and 2684 to 2701; these read TFND…SHSS and VGPP…VAQP.

In terms of assembly, component of the Brahma complex, which is composed of Brm, Osa, Mor, Snr1/Bap45, Bap111/Dalao, Bap55, Bap60 and Bap47. Interacts with Pnr and Chi via its EHD domain. In terms of tissue distribution, ubiquitously expressed in early embryo. In third instar larvae, it is ubiquitously expressed in wing and eye-antenna imaginal disks, with a stronger expression in a band just anterior to the morphogenetic furrow.

The protein resides in the nucleus. Functionally, trithorax group (trxG) protein required for embryonic segmentation, development of the notum and wing margin, and photoreceptor differentiation. Required for the activation of genes such as Antp, Ubx and Eve. Binds to DNA without specific affinity, suggesting that it is recruited to promoters by promoter-specific proteins. Essential component of the Brahma complex, a multiprotein complex which is the equivalent of the yeast SWI/SNF complex and acts by remodeling the chromatin by catalyzing an ATP-dependent alteration in the structure of nucleosomal DNA. This complex can both serve as a transcriptional coactivator or corepressor, depending on the context. Acts as an essential coactivator for Zeste, which recruits the whole complex to specific genes. In contrast, it acts as a corepressor for Wg target genes, possibly via an interaction with Pan and Gro. It also acts as a negative regulator for proneural achaete-scute, when it is directly recruited by Pan and Chi. Also represses E2f activation. This chain is Trithorax group protein osa (osa), found in Drosophila melanogaster (Fruit fly).